A 297-amino-acid polypeptide reads, in one-letter code: HTH-type transcriptional regulator AceR (297 aa).

The 60-residue stretch at 1–60 folds into the HTH lysR-type domain; it reads MNINQEQLLMFQAVMETGSFSAAARKLGKVPSAVSMSIANLEIDLNLTLFERKGREPTPT. A DNA-binding region (H-T-H motif) is located at residues 20-39; sequence FSAAARKLGKVPSAVSMSIA.

Belongs to the LysR transcriptional regulatory family. As to quaternary structure, homodimer and homotetramer. Binding of chlorhexidine at the inducer-binding domain causes a quaternary structural change that favors interactions between dimers to form tetramers.

It localises to the cytoplasm. Its function is as follows. Regulates the expression of the AceI transporter. Binds DNA and chlorhexidine. Binds to regulatory sites within the intergenic region between the aceI and aceR genes, and affects the interaction between RNA polymerase (RNAP) and promoter DNA both in the presence and in the absence of chlorhexidine. In the absence of chlorhexidine, prevents transcription of the aceI gene by disrupting interactions between the promoter DNA and RNAP. In the presence of chlorhexidine, activates expression of aceI. When AceR interacts with chlorhexidine, it undergoes a conformational change and the tetrameric form either releases the DNA or shifts the position of the DNA-binding region to allow RNAP to bind onto the promoter DNA to proceed with aceI transcription. In Acinetobacter baumannii (strain ATCC 17978 / DSM 105126 / CIP 53.77 / LMG 1025 / NCDC KC755 / 5377), this protein is HTH-type transcriptional regulator AceR.